A 121-amino-acid polypeptide reads, in one-letter code: Large ribosomal subunit protein uL18 (121 aa).

The disordered stretch occupies residues 1 to 25 (MKIVISKPDKNKIRQKRHRRVRGKL). The span at 13 to 23 (IRQKRHRRVRG) shows a compositional bias: basic residues.

The protein belongs to the universal ribosomal protein uL18 family. As to quaternary structure, part of the 50S ribosomal subunit; part of the 5S rRNA/L5/L18/L25 subcomplex. Contacts the 5S and 23S rRNAs.

Functionally, this is one of the proteins that bind and probably mediate the attachment of the 5S RNA into the large ribosomal subunit, where it forms part of the central protuberance. This Streptococcus pyogenes serotype M28 (strain MGAS6180) protein is Large ribosomal subunit protein uL18.